An 86-amino-acid chain; its full sequence is Defensin-like protein 97 (86 aa).

An N-terminal signal peptide occupies residues Met1–Gly27. 4 disulfide bridges follow: Cys31-Cys74, Cys38-Cys60, Cys44-Cys71, and Cys48-Cys73.

Belongs to the DEFL family.

It localises to the secreted. The protein is Defensin-like protein 97 (LCR85) of Arabidopsis thaliana (Mouse-ear cress).